We begin with the raw amino-acid sequence, 90 residues long: UPF0297 protein LVIS_1222 (90 aa).

It belongs to the UPF0297 family.

The protein is UPF0297 protein LVIS_1222 of Levilactobacillus brevis (strain ATCC 367 / BCRC 12310 / CIP 105137 / JCM 1170 / LMG 11437 / NCIMB 947 / NCTC 947) (Lactobacillus brevis).